The sequence spans 125 residues: Large ribosomal subunit protein bL12 (125 aa).

The protein belongs to the bacterial ribosomal protein bL12 family. In terms of assembly, homodimer. Part of the ribosomal stalk of the 50S ribosomal subunit. Forms a multimeric L10(L12)X complex, where L10 forms an elongated spine to which 2 to 4 L12 dimers bind in a sequential fashion. Binds GTP-bound translation factors.

Functionally, forms part of the ribosomal stalk which helps the ribosome interact with GTP-bound translation factors. Is thus essential for accurate translation. This is Large ribosomal subunit protein bL12 from Francisella tularensis subsp. holarctica (strain FTNF002-00 / FTA).